The chain runs to 507 residues: Beta-glucosidase 3 (507 aa).

A signal peptide spans 1–23; the sequence is MELTLSLLTIFLLFFALSGRCSD. Gln41 serves as a coordination point for a beta-D-glucoside. Asn64 is a glycosylation site (N-linked (GlcNAc...) asparagine). A beta-D-glucoside contacts are provided by residues His138 and 183 to 184; that span reads NE. The Proton donor role is filled by Glu184. Residues Cys203 and Cys210 are joined by a disulfide bond. N-linked (GlcNAc...) asparagine glycosylation is found at Asn209 and Asn214. Tyr326 provides a ligand contact to a beta-D-glucoside. Asn361 carries an N-linked (GlcNAc...) asparagine glycan. Glu394 contacts a beta-D-glucoside. Glu394 acts as the Nucleophile in catalysis. Asn429 carries N-linked (GlcNAc...) asparagine glycosylation. Positions 439 and 455 each coordinate a beta-D-glucoside. N-linked (GlcNAc...) asparagine glycosylation is found at Asn461, Asn485, and Asn500.

This sequence belongs to the glycosyl hydrolase 1 family.

The catalysed reaction is Hydrolysis of terminal, non-reducing beta-D-glucosyl residues with release of beta-D-glucose.. This is Beta-glucosidase 3 from Arabidopsis thaliana (Mouse-ear cress).